The primary structure comprises 816 residues: Mitogen-activated protein kinase 7 (816 aa).

Residues 1 to 26 (MAEPLKEEDGEDGSAEPPGPVKAEPA) are disordered. Ala-2 bears the N-acetylalanine mark. A required for cytoplasmic targeting region spans residues 2 to 77 (AEPLKEEDGE…VVSSARRRLT (76 aa)). Residues 55 to 347 (YEIIETIGNG…AAAALRHPFL (293 aa)) enclose the Protein kinase domain. Residues 61-69 (IGNGAYGVV) and Lys-84 contribute to the ATP site. The segment at 78–139 (GQQVAIKKIP…FKSVYVVLDL (62 aa)) is required for binding to MAP2K5. Residues 140-406 (MESDLHQIIH…QQIRFQPSLQ (267 aa)) form a necessary for oligomerization region. The Proton acceptor role is filled by Asp-182. A TXY motif is present at residues 219-221 (TEY). The tract at residues 406–737 (QPVASEPGCP…PVFSGTPKGS (332 aa)) is disordered. Residues 407–806 (PVASEPGCPD…REIQMDSPML (400 aa)) form a may not be required for kinase activity; required to stimulate MEF2C activity region. Pro residues-rich tracts occupy residues 433 to 445 (SPPP…PGPA) and 454 to 463 (QPPPPVSEPA). Positions 476 to 486 (KAALKAALLKS) are enriched in low complexity. Composition is skewed to basic and acidic residues over residues 502 to 519 (PEPR…EREE), 527 to 544 (RAKE…KERG), and 563 to 573 (DNDRSLLERWT). The short motif at 505–539 (RKPVTAQERQREREEKRRRRQERAKEREKRRQERE) is the Nuclear localization signal element. Positions 578–587 (PAAPALTSVP) are enriched in low complexity. Composition is skewed to pro residues over residues 588–610 (APAP…PGPV) and 628–655 (VPQP…PAPP). A compositionally biased stretch (low complexity) spans 676 to 685 (PGSSTPGVLP). Residues 686-695 (YFPPGLPPPD) are compositionally biased toward pro residues. Residues 701–720 (QSSMSESPDVNLVTQQLSKS) show a composition bias toward polar residues. Phosphoserine is present on Ser-720. A Phosphothreonine modification is found at Thr-733.

Belongs to the protein kinase superfamily. CMGC Ser/Thr protein kinase family. MAP kinase subfamily. In terms of assembly, interacts with MAP2K5. Forms oligomers. Interacts with MEF2A, MEF2C and MEF2D; the interaction phosphorylates the MEF2s and enhances transcriptional activity of MEF2A, MEF2C but not MEF2D. Interacts with SGK1. Preferentially interacts with PML isoform PML-4 but shows interaction also with its other isoforms: isoform PML-1, isoform PML-2, isoform PML-3 and isoform PML-6. Interacts (via N-terminal half) with HSP90AB1-CDC37 chaperone complex in resting cells; the interaction is MAP2K5-independent and prevents MAPK7 from ubiquitination and proteasomal degradation. Interacts with STUB1/CHIP; the interaction is enhanced in the presence of IGF1 or MAP2K5 and promotes STUB1/CHIP E3 ligase activity. The cofactor is Mg(2+). Dually phosphorylated on Thr-219 and Tyr-221, which activates the enzyme. Autophosphorylated in vitro on threonine and tyrosine residues when the C-terminal part of the kinase, which could have a regulatory role, is absent. In terms of tissue distribution, expressed in many adult tissues. Abundant in heart, placenta, lung, kidney and skeletal muscle. Not detectable in liver.

It is found in the cytoplasm. The protein localises to the nucleus. Its subcellular location is the PML body. It catalyses the reaction L-seryl-[protein] + ATP = O-phospho-L-seryl-[protein] + ADP + H(+). It carries out the reaction L-threonyl-[protein] + ATP = O-phospho-L-threonyl-[protein] + ADP + H(+). With respect to regulation, activated by tyrosine and threonine phosphorylation. Activated in response to hyperosmolarity, hydrogen peroxide, and epidermal growth factor (EGF). Plays a role in various cellular processes such as proliferation, differentiation and cell survival. The upstream activator of MAPK7 is the MAPK kinase MAP2K5. Upon activation, it translocates to the nucleus and phosphorylates various downstream targets including MEF2C. EGF activates MAPK7 through a Ras-independent and MAP2K5-dependent pathway. As part of the MAPK/ERK signaling pathway, acts as a negative regulator of apoptosis in cardiomyocytes via interaction with STUB1/CHIP and promotion of STUB1-mediated ubiquitination and degradation of ICER-type isoforms of CREM. May have a role in muscle cell differentiation. May be important for endothelial function and maintenance of blood vessel integrity. MAP2K5 and MAPK7 interact specifically with one another and not with MEK1/ERK1 or MEK2/ERK2 pathways. Phosphorylates SGK1 at Ser-78 and this is required for growth factor-induced cell cycle progression. Involved in the regulation of p53/TP53 by disrupting the PML-MDM2 interaction. The sequence is that of Mitogen-activated protein kinase 7 (MAPK7) from Homo sapiens (Human).